A 394-amino-acid polypeptide reads, in one-letter code: Phosphopentomutase (394 aa).

Residues aspartate 14, aspartate 287, histidine 292, aspartate 328, histidine 329, and histidine 340 each coordinate Mn(2+).

It belongs to the phosphopentomutase family. Mn(2+) is required as a cofactor.

The protein localises to the cytoplasm. It carries out the reaction 2-deoxy-alpha-D-ribose 1-phosphate = 2-deoxy-D-ribose 5-phosphate. The enzyme catalyses alpha-D-ribose 1-phosphate = D-ribose 5-phosphate. It functions in the pathway carbohydrate degradation; 2-deoxy-D-ribose 1-phosphate degradation; D-glyceraldehyde 3-phosphate and acetaldehyde from 2-deoxy-alpha-D-ribose 1-phosphate: step 1/2. Its function is as follows. Isomerase that catalyzes the conversion of deoxy-ribose 1-phosphate (dRib-1-P) and ribose 1-phosphate (Rib-1-P) to deoxy-ribose 5-phosphate (dRib-5-P) and ribose 5-phosphate (Rib-5-P), respectively. This is Phosphopentomutase from Listeria monocytogenes serotype 4a (strain HCC23).